The primary structure comprises 317 residues: E3 ubiquitin-protein ligase NRDP1 (317 aa).

An RING-type; degenerate zinc finger spans residues 18-57 (CPICSGVLEEPVQAPHCEHAFCNACITQWFSQQQTCPVDR). A coiled-coil region spans residues 135 to 175 (IKHLRSVVQQQQIRIGELEKTAAESKHQLSEQKRDIQLLKA).

The enzyme catalyses S-ubiquitinyl-[E2 ubiquitin-conjugating enzyme]-L-cysteine + [acceptor protein]-L-lysine = [E2 ubiquitin-conjugating enzyme]-L-cysteine + N(6)-ubiquitinyl-[acceptor protein]-L-lysine.. It participates in protein modification; protein ubiquitination. Acts as E3 ubiquitin-protein ligase and regulates the degradation of target proteins. The protein is E3 ubiquitin-protein ligase NRDP1 (rnf41) of Xenopus laevis (African clawed frog).